Reading from the N-terminus, the 698-residue chain is Glycine--tRNA ligase beta subunit (698 aa).

This sequence belongs to the class-II aminoacyl-tRNA synthetase family. As to quaternary structure, tetramer of two alpha and two beta subunits.

Its subcellular location is the cytoplasm. The enzyme catalyses tRNA(Gly) + glycine + ATP = glycyl-tRNA(Gly) + AMP + diphosphate. This is Glycine--tRNA ligase beta subunit from Xanthomonas campestris pv. campestris (strain 8004).